The sequence spans 107 residues: uncharacterized protein (107 aa).

3 helical membrane passes run 16–36, 47–67, and 85–105; these read VIPC…SESL, IISL…HSLV, and LIVL…TSLI.

It is found in the membrane. This is an uncharacterized protein from Saccharomyces cerevisiae (strain ATCC 204508 / S288c) (Baker's yeast).